The sequence spans 77 residues: U8-lycotoxin-Ls1p (77 aa).

The first 20 residues, 1–20, serve as a signal peptide directing secretion; that stretch reads MKLMIFTGLVLFAIVSLIEA. A propeptide spanning residues 21–26 is cleaved from the precursor; the sequence is QAENEK.

This sequence belongs to the neurotoxin 19 (CSTX) family. 08 (U8-Lctx) subfamily. Contains 4 disulfide bonds. As to expression, expressed by the venom gland.

The protein resides in the secreted. The chain is U8-lycotoxin-Ls1p from Lycosa singoriensis (Wolf spider).